Here is a 133-residue protein sequence, read N- to C-terminus: Ribosome-binding factor A (133 aa).

The protein belongs to the RbfA family. Monomer. Binds 30S ribosomal subunits, but not 50S ribosomal subunits or 70S ribosomes.

It is found in the cytoplasm. One of several proteins that assist in the late maturation steps of the functional core of the 30S ribosomal subunit. Associates with free 30S ribosomal subunits (but not with 30S subunits that are part of 70S ribosomes or polysomes). Required for efficient processing of 16S rRNA. May interact with the 5'-terminal helix region of 16S rRNA. The protein is Ribosome-binding factor A of Proteus mirabilis (strain HI4320).